The primary structure comprises 309 residues: MNRLQVELPGLSLKNPIIPASGCFGFGREYAQFYDLSVLGSIMIKATTEQPRYGNPTPRVAETPGGMLNAIGLQNPGLEKVMNSELPWLEQFDLPIIANVAGSQAEDYVAVAKEISKAPNVHALELNISCPNVKTGGIAFGTNPEIAADLTKRVKEVSEVPVYVKLSPNVANIVEIAKAIENAGADGLTMINTLLGMRLDLKTAKPILANRTGGLSGPAIKPVAIRMVHEVSQAVNIPIIGMGGIETAEDVIEFFYAGASAVAVGTANFIDPFVCPTIIEELPALLDELGFDHISECQGRSWKQTCHSR.

Residues Ser-21 and 45-46 (KA) contribute to the FMN site. Residues Lys-45 and 69-73 (NAIGL) each bind substrate. FMN-binding residues include Asn-99 and Asn-127. Asn-127 is a binding site for substrate. The active-site Nucleophile is the Cys-130. Residues Lys-165 and Ile-191 each contribute to the FMN site. Residue 192-193 (NT) coordinates substrate. FMN contacts are provided by residues Gly-217, 243–244 (GG), and 265–266 (GT).

Belongs to the dihydroorotate dehydrogenase family. Type 1 subfamily. In terms of assembly, heterotetramer of 2 PyrK and 2 PyrD type B subunits. FMN is required as a cofactor.

Its subcellular location is the cytoplasm. The enzyme catalyses (S)-dihydroorotate + NAD(+) = orotate + NADH + H(+). It participates in pyrimidine metabolism; UMP biosynthesis via de novo pathway; orotate from (S)-dihydroorotate (NAD(+) route): step 1/1. Its function is as follows. Catalyzes the conversion of dihydroorotate to orotate with NAD(+) as electron acceptor. The chain is Dihydroorotate dehydrogenase B (NAD(+)), catalytic subunit (pyrD) from Bacillus cereus (strain AH187).